The sequence spans 112 residues: Protein NIM1-INTERACTING 3 (112 aa).

Disordered regions lie at residues 1–20 and 77–112; these read MDRD…EEKM and EKAA…NLSL. Coiled coils occupy residues 1–35 and 69–96; these read MDRD…EMRK and NKAE…SKEK. Positions 77–89 are enriched in low complexity; that stretch reads EKAANESSSASNE.

The protein belongs to the NPR1-interactor family. In terms of assembly, interacts with NPR1 C-terminal region.

It is found in the nucleus. The sequence is that of Protein NIM1-INTERACTING 3 from Arabidopsis thaliana (Mouse-ear cress).